The following is a 470-amino-acid chain: Chromosomal replication initiator protein DnaA (470 aa).

The domain I, interacts with DnaA modulators stretch occupies residues 1 to 79 (MTDDTWGLLR…AVQRLAFKVA (79 aa)). Positions 79–128 (AANSPTRPVQPTMSEAIEEPAPLQTTVVDQLGNQEGNTSVKSPPEDLQAA) are domain II. Residues 129–350 (PLDPRFTFDS…GALTRLFAFA (222 aa)) are domain III, AAA+ region. ATP contacts are provided by Gly-173, Gly-175, Lys-176, and Thr-177. A domain IV, binds dsDNA region spans residues 351–470 (SLVGREIDMD…VEMLRRSLEA (120 aa)).

The protein belongs to the DnaA family. Oligomerizes as a right-handed, spiral filament on DNA at oriC.

Its subcellular location is the cytoplasm. In terms of biological role, plays an essential role in the initiation and regulation of chromosomal replication. ATP-DnaA binds to the origin of replication (oriC) to initiate formation of the DNA replication initiation complex once per cell cycle. Binds the DnaA box (a 9 base pair repeat at the origin) and separates the double-stranded (ds)DNA. Forms a right-handed helical filament on oriC DNA; dsDNA binds to the exterior of the filament while single-stranded (ss)DNA is stabiized in the filament's interior. The ATP-DnaA-oriC complex binds and stabilizes one strand of the AT-rich DNA unwinding element (DUE), permitting loading of DNA polymerase. After initiation quickly degrades to an ADP-DnaA complex that is not apt for DNA replication. Binds acidic phospholipids. The protein is Chromosomal replication initiator protein DnaA of Ruegeria sp. (strain TM1040) (Silicibacter sp.).